Here is a 622-residue protein sequence, read N- to C-terminus: Gamma tubulin complex adapter SPC72 (622 aa).

Disordered regions lie at residues 1–58 and 221–263; these read MVRR…PALM and DKEE…IHDS. A compositionally biased stretch (polar residues) spans 228–238; the sequence is LAQSSPAGSQL. Residues 239 to 250 are compositionally biased toward basic and acidic residues; it reads ESRDSPSSKEEN.

In terms of assembly, homooligomer. Interacts with CDC5, KAR1, KIN4, SPC97, SPC98, STU2 and TUB4. Phosphorylated by CDC5.

It is found in the cytoplasm. It localises to the cytoskeleton. The protein resides in the microtubule organizing center. The protein localises to the spindle pole body. Spindle pole body (SPB) component that acts as the gamma-tubulin complex-binding protein of the SPB outer plaque. Anchors cytoplasmic microtubules at the half bridge of the spindle pole body (SPB) and accordingly functions in nuclear position and spindle orientation, including anaphase spindle migration into the bud. Recruits KIN4 kinase to both SPBs when cytoplasmic microtubules are defective, to delay mitotic exit. Links cytoplasmic microtubules with spindle orientation checkpoint (SPOC) components and, therefore, could function as part of the sensors of spindle orientation defects. Required for cytoplasmic astral microtubule growth during mitosis. Is strictly required for mating and karyogamy. The polypeptide is Gamma tubulin complex adapter SPC72 (SPC72) (Saccharomyces cerevisiae (strain ATCC 204508 / S288c) (Baker's yeast)).